The chain runs to 270 residues: MHRVKAFKNLRLLITGKKEEKNKKPVEIPARDIAANYCSRHEYDWGMFVKNENPFRGITYQSYNAFKLRRFIPDMNQEDHKEYLFLAEQAEQEALKQELKEQDLYTMIEEISDDDVFTNPTMTDLAEKLGLEDESDDDDSGINFDVSTLADEDTLYQREILDREERRKENNISNESVSEEPESPLFNDKGRIVNCSTCIYNNKLQKRGGYGVEEYAEHYVFPDDKDDNLVCLLSDADRVIREIENSNFDIEGFEQSIDYDMLIHDELFIS.

The segment at 166 to 186 is disordered; the sequence is RRKENNISNESVSEEPESPLF.

This is an uncharacterized protein from Ostreid herpesvirus 1 (isolate France) (OsHV-1).